We begin with the raw amino-acid sequence, 414 residues long: Mini-circle putative transposase for IS117 (414 aa).

The polypeptide is Mini-circle putative transposase for IS117 (Streptomyces coelicolor (strain ATCC BAA-471 / A3(2) / M145)).